A 70-amino-acid polypeptide reads, in one-letter code: U-actitoxin-Avd11a (70 aa).

The ShKT domain maps to 36–70 (CNDYKSSSYCRSVGSRNECGIHKYRMYCRKTCGSC). 3 disulfide bridges follow: Cys36–Cys70, Cys45–Cys63, and Cys54–Cys67. A crucial for binding to potassium channels region spans residues 58–59 (KY).

The protein belongs to the sea anemone type 1 potassium channel toxin family. Type 1b subfamily.

It localises to the secreted. It is found in the nematocyst. Inhibits voltage-gated potassium channels (Kv1/KCNA). This chain is U-actitoxin-Avd11a, found in Anemonia viridis (Snakelocks anemone).